Consider the following 986-residue polypeptide: Zinc finger protein 445 (986 aa).

In terms of domain architecture, SCAN box spans 52–134; it reads RQLFRQLRYH…ALLEELQRDL (83 aa). In terms of domain architecture, KRAB spans 219 to 289; it reads LTFQDVEVTF…NICTVQLKRD (71 aa). Glycyl lysine isopeptide (Lys-Gly) (interchain with G-Cter in SUMO2) cross-links involve residues lysine 302, lysine 360, and lysine 385. The tract at residues 433–460 is disordered; it reads QNTGLKENGKDRYGETSRKSWHAHPEHR. Positions 439–460 are enriched in basic and acidic residues; the sequence is ENGKDRYGETSRKSWHAHPEHR. C2H2-type zinc fingers lie at residues 470-492 and 498-520; these read FQCRVCGKAFKWRSNRIRHEKIH and YQCSLCEKAFQRLSSYRLHQKTH. Lysine 524 participates in a covalent cross-link: Glycyl lysine isopeptide (Lys-Gly) (interchain with G-Cter in SUMO2). 2 C2H2-type zinc fingers span residues 553–575 and 581–604; these read LHCNQCGKNFSCKSYAIEHQRIH and YKCTRCRKTFRWKSNFSRHMKLHH. Lysine 609 is covalently cross-linked (Glycyl lysine isopeptide (Lys-Gly) (interchain with G-Cter in SUMO2)). C2H2-type zinc fingers lie at residues 634–656 and 662–686; these read FPCQNCGKTFTQKKSLIEHQRIH and YQCSGCGETFTYRSSYIIHMKRTQH. A Glycyl lysine isopeptide (Lys-Gly) (interchain with G-Cter in SUMO2) cross-link involves residue lysine 691. 4 consecutive C2H2-type zinc fingers follow at residues 718-740, 746-768, 796-818, and 824-846; these read NKCKYCGKAFHNRSFLLIHERVH, YQCRECEKAFRWSSNLYRHQRKH, FWCQECGKTFTRKRSLLDHKGIH, and FKCNLCEKSFDRNYRLVNHQRIH. Residue lysine 929 forms a Glycyl lysine isopeptide (Lys-Gly) (interchain with G-Cter in SUMO2) linkage. C2H2-type zinc fingers lie at residues 933–955 and 961–983; these read HKCSTCGKTFKKHSHLISHKRCH and FKCIVCGKTFRWSSNLTRHMKNH.

This sequence belongs to the krueppel C2H2-type zinc-finger protein family.

The protein localises to the nucleus. Functionally, transcription regulator required to maintain maternal and paternal gene imprinting, a process by which gene expression is restricted in a parent of origin-specific manner by epigenetic modification of genomic DNA and chromatin, including DNA methylation. Acts by controlling DNA methylation during the earliest multicellular stages of development at multiple imprinting control regions (ICRs). Acts together with ZFP57, but ZFP57 plays the predominant role in imprinting maintenance. In contrast, ZNF445 seems to be the major factor in human early embryonic imprinting maintenance. The polypeptide is Zinc finger protein 445 (Znf445) (Mus musculus (Mouse)).